The primary structure comprises 579 residues: Probable N-acetylgalactosaminyltransferase 9 (579 aa).

Residues 1–12 (MLRYIIPRKKGT) lie on the Cytoplasmic side of the membrane. The helical; Signal-anchor for type II membrane protein transmembrane segment at 13 to 30 (FVIAAFLTVAFFCIVAYH) threads the bilayer. Residues 31–579 (RNDRRRTKFQ…KWNFIDPAKA (549 aa)) lie on the Lumenal side of the membrane. Asparagine 67 carries an N-linked (GlcNAc...) asparagine glycan. 5 disulfide bridges follow: cysteine 123–cysteine 356, cysteine 347–cysteine 427, cysteine 464–cysteine 483, cysteine 507–cysteine 520, and cysteine 545–cysteine 562. Positions 133–243 (LPKTSVIIIF…HGWLEPIVQR (111 aa)) are catalytic subdomain A. The substrate site is built by aspartate 174 and arginine 204. Aspartate 227 contributes to the Mn(2+) binding site. Serine 228 provides a ligand contact to substrate. Position 229 (histidine 229) interacts with Mn(2+). Residues 302-364 (YIRSPTMAGG…PCSHVGHIFR (63 aa)) form a catalytic subdomain B region. Residue tryptophan 333 coordinates substrate. Histidine 361 contacts Mn(2+). Residues arginine 364, histidine 367, and tyrosine 369 each coordinate substrate. N-linked (GlcNAc...) asparagine glycosylation occurs at asparagine 370. The Ricin B-type lectin domain maps to 450–574 (AYGALHTVVS…KDEHQKWNFI (125 aa)).

The protein belongs to the glycosyltransferase 2 family. GalNAc-T subfamily. Requires Mn(2+) as cofactor.

The protein localises to the golgi apparatus membrane. It participates in protein modification; protein glycosylation. Functionally, probable glycopeptide transferase involved in O-linked oligosaccharide biosynthesis. Glycopeptide transferases catalyze the transfer of an N-acetyl-D-galactosamine residue to an already glycosylated peptide. In contrast to other members of the family, it does not act as a peptide transferase that transfers GalNAc onto serine or threonine residue on peptides that have been tested. Some peptide transferase activity is however not excluded, considering that its appropriate peptide substrate may remain unidentified. In Caenorhabditis elegans, this protein is Probable N-acetylgalactosaminyltransferase 9 (gly-9).